The following is a 104-amino-acid chain: L-rhamnose mutarotase (104 aa).

A substrate-binding site is contributed by Tyr18. His22 functions as the Proton donor in the catalytic mechanism. Substrate is bound by residues Tyr41 and Trp76–Trp77.

Belongs to the rhamnose mutarotase family. Homodimer.

It localises to the cytoplasm. It catalyses the reaction alpha-L-rhamnose = beta-L-rhamnose. The protein operates within carbohydrate metabolism; L-rhamnose metabolism. Functionally, involved in the anomeric conversion of L-rhamnose. In Shigella flexneri serotype 5b (strain 8401), this protein is L-rhamnose mutarotase.